The sequence spans 121 residues: Large ribosomal subunit protein bL12 (121 aa).

Belongs to the bacterial ribosomal protein bL12 family. In terms of assembly, homodimer. Part of the ribosomal stalk of the 50S ribosomal subunit. Forms a multimeric L10(L12)X complex, where L10 forms an elongated spine to which 2 to 4 L12 dimers bind in a sequential fashion. Binds GTP-bound translation factors.

Forms part of the ribosomal stalk which helps the ribosome interact with GTP-bound translation factors. Is thus essential for accurate translation. The sequence is that of Large ribosomal subunit protein bL12 from Xanthomonas axonopodis pv. citri (strain 306).